Consider the following 39-residue polypeptide: RapF inhibitor (39 aa).

The propeptide occupies 1 to 34 (MKLKSKLLLSCLALSTVFVATTIANAPTHQIEVA).

Belongs to the Phr family. As to quaternary structure, interacts with RapF and inhibits its interaction with ComA. Contains a predicted signal peptide cleavage site in the N-terminal region, however the propeptide is probably subject to only one processing event, at the N-terminal end of the mature peptide.

It localises to the secreted. The protein resides in the cytoplasm. Its function is as follows. Signaling molecule involved in the regulation of genetic competence development. Secreted during production, but the mature peptide acts intracellularly, indicating that it needs to be imported into the cell to function. Stimulates expression of the genes controlled by ComA, a transcriptional factor that regulates the development of genetic competence. Acts by inhibiting RapF, which regulates the activity of ComA. The polypeptide is RapF inhibitor (phrF) (Bacillus subtilis (strain 168)).